The following is a 474-amino-acid chain: MEFEPVIGLEVHVQMSTNTKCFCSCKIEFGAEPNTNVCPVCLGMPGSLPVLNKKALEYAIKASLALNCEVHELSVFARKNYFYPDLPKGYQISQYDKPLATNGYIDIKVNDKTERIRIHRLHMEEDAGKTIHKGSYSYVDLNRAGTPLMEIVSEPDIRSAVGARLYLEKLRNIMRYIGVSDADMEKGQLRCDVNISLRPKGEEKFGTKVEIKNINSFRFVQKAIEYEIERQARILRKGGEIVQETRLFDEKTGKTFTMRTKEEAHDYRYFPDPDLIPVRITKEYIEEIRKSLPELPDQKAERYVKELKLTEYDAEVLVADKDRALFFEKAVSVYSENPKSIANWIINELLGKLNEEGIEISNSPVRPEHIAELVQLIDKGDISSKIGKEVFEEVFKTGKSPKTIVEEKGLKQVSDEGEIRKIVEEVLNNHPAEVEKYKAGNQKLMGFFVGQVMKATRGKANPKLVNKILQELLK.

It belongs to the GatB/GatE family. GatB subfamily. In terms of assembly, heterotrimer of A, B and C subunits.

The enzyme catalyses L-glutamyl-tRNA(Gln) + L-glutamine + ATP + H2O = L-glutaminyl-tRNA(Gln) + L-glutamate + ADP + phosphate + H(+). It carries out the reaction L-aspartyl-tRNA(Asn) + L-glutamine + ATP + H2O = L-asparaginyl-tRNA(Asn) + L-glutamate + ADP + phosphate + 2 H(+). Allows the formation of correctly charged Asn-tRNA(Asn) or Gln-tRNA(Gln) through the transamidation of misacylated Asp-tRNA(Asn) or Glu-tRNA(Gln) in organisms which lack either or both of asparaginyl-tRNA or glutaminyl-tRNA synthetases. The reaction takes place in the presence of glutamine and ATP through an activated phospho-Asp-tRNA(Asn) or phospho-Glu-tRNA(Gln). The sequence is that of Aspartyl/glutamyl-tRNA(Asn/Gln) amidotransferase subunit B from Persephonella marina (strain DSM 14350 / EX-H1).